The following is a 440-amino-acid chain: Ferreportin (440 aa).

Residues 1 to 8 (MKVQSLLR) are Cytoplasmic-facing. Residues 9 to 38 (IETQLLLGRLLTRSGDQAWDFVVPFALLVI) traverse the membrane as a helical segment. Residue Asp-24 participates in Ca(2+) binding. Residues 39–42 (FPGK) are Extracellular-facing. Residues 43-69 (LQVAAFYYLIVKIGTFLLTPSSGKWID) traverse the membrane as a helical segment. Topologically, residues 70–72 (THP) are cytoplasmic. The helical transmembrane segment at 73 to 103 (RIQVVKWGVWLQFFAILAGMVFFGMLDGLVR) threads the bilayer. Gln-84 is a binding site for Ca(2+). Topologically, residues 104-109 (AGGRES) are extracellular. A helical transmembrane segment spans residues 110 to 145 (WLLSVLFIALALSGVMASLGSQITDISVGNDLAPSL). The Cytoplasmic segment spans residues 146–147 (VA). A helical transmembrane segment spans residues 148 to 176 (PEKLTHFNSWLRRIDLATEVGAPILAGAL). The Extracellular portion of the chain corresponds to 177-186 (FAFHPEQLPL). A helical transmembrane segment spans residues 187–213 (AGLFLIGLWNLVSFVPEYFLLRNVIQR). Positions 196 and 203 each coordinate Ca(2+). Residues 214 to 242 (SGLKIKVLTEAQSWKDTFHINLRGSFSDP) are Cytoplasmic-facing. The chain crosses the membrane as a helical span at residues 243–271 (IFWLILSYALLWLSVLSPHGVLLAAYLKD). The Extracellular portion of the chain corresponds to 272–276 (EMRLP). A helical transmembrane segment spans residues 277-304 (ETEIGLFRGLGAVFGLISTVSFPYLVRR). Residues 305–306 (LG) lie on the Cytoplasmic side of the membrane. The helical transmembrane segment at 307–329 (LISSSRWHLGFQGVTLGIAVTAF) threads the bilayer. The Extracellular segment spans residues 330–335 (AMGSTA). The helical transmembrane segment at 336–365 (SVYVFLGCILLSRVGLYGFSNGEFELRQRL) threads the bilayer. The Cytoplasmic portion of the chain corresponds to 366–370 (IPEGR). A helical membrane pass occupies residues 371 to 395 (RGELNSLSSLTTTSATLILFSAGSL). The Extracellular segment spans residues 396 to 398 (LPQ). Residues 399-424 (TEDFKYLVYVSLAAVLLANVVFIKWS) traverse the membrane as a helical segment. Over 425–440 (SRQGVVTSGAAEPVES) the chain is Cytoplasmic.

This sequence belongs to the ferroportin (FP) (TC 2.A.100) family. Requires Ca(2+) as cofactor.

It is found in the cell membrane. In terms of biological role, iron transpoter that exports Fe(2+) from the cell. Also binds to Co(2+) and Ni(2+). May act as a multivalent divalent metal transporter. The transporter is composed of 12 transmembrane (TM) helices organized into N-terminal (TM1-6) and C-terminal (TM7-12) domains. The substrate-binding site is formed at the interface of the two domains and is alternately accessible from either side of the membrane. The transport cycle is viewed as a series of ligand-induced conformational changes that include open outward and open inward states. In Bdellovibrio bacteriovorus (strain ATCC 15356 / DSM 50701 / NCIMB 9529 / HD100), this protein is Ferreportin (slc39).